Here is a 378-residue protein sequence, read N- to C-terminus: Mannitol-1-phosphate 5-dehydrogenase (378 aa).

Serine 4–glycine 15 contacts NAD(+).

This sequence belongs to the mannitol dehydrogenase family.

It catalyses the reaction D-mannitol 1-phosphate + NAD(+) = beta-D-fructose 6-phosphate + NADH + H(+). This Streptococcus pneumoniae (strain ATCC BAA-255 / R6) protein is Mannitol-1-phosphate 5-dehydrogenase.